We begin with the raw amino-acid sequence, 184 residues long: Photosystem I assembly protein Ycf4 (184 aa).

Helical transmembrane passes span 21–43 (NFCWAAILLFGALGFFFVGISSY) and 68–90 (FYGIAGLFLSFYLWCTIFWNVGS).

The protein belongs to the Ycf4 family.

The protein resides in the plastid. Its subcellular location is the chloroplast thylakoid membrane. In terms of biological role, seems to be required for the assembly of the photosystem I complex. This chain is Photosystem I assembly protein Ycf4, found in Physcomitrium patens (Spreading-leaved earth moss).